Reading from the N-terminus, the 437-residue chain is Serine hydroxymethyltransferase 2 (437 aa).

(6S)-5,6,7,8-tetrahydrofolate contacts are provided by residues Leu-125 and 129-131; that span reads GHL. Residue Lys-234 is modified to N6-(pyridoxal phosphate)lysine.

Belongs to the SHMT family. As to quaternary structure, homodimer. Pyridoxal 5'-phosphate serves as cofactor.

It localises to the cytoplasm. The enzyme catalyses (6R)-5,10-methylene-5,6,7,8-tetrahydrofolate + glycine + H2O = (6S)-5,6,7,8-tetrahydrofolate + L-serine. The protein operates within one-carbon metabolism; tetrahydrofolate interconversion. Its pathway is amino-acid biosynthesis; glycine biosynthesis; glycine from L-serine: step 1/1. Its function is as follows. Catalyzes the reversible interconversion of serine and glycine with tetrahydrofolate (THF) serving as the one-carbon carrier. This reaction serves as the major source of one-carbon groups required for the biosynthesis of purines, thymidylate, methionine, and other important biomolecules. Also exhibits THF-independent aldolase activity toward beta-hydroxyamino acids, producing glycine and aldehydes, via a retro-aldol mechanism. The chain is Serine hydroxymethyltransferase 2 from Mesorhizobium japonicum (strain LMG 29417 / CECT 9101 / MAFF 303099) (Mesorhizobium loti (strain MAFF 303099)).